A 305-amino-acid chain; its full sequence is UDP-N-acetylenolpyruvoylglucosamine reductase (305 aa).

The region spanning 22–190 is the FAD-binding PCMH-type domain; it reads KVGGAADFFA…LSARFRLQAG (169 aa). Arg-169 is an active-site residue. Ser-220 serves as the catalytic Proton donor. Glu-290 is an active-site residue.

This sequence belongs to the MurB family. FAD is required as a cofactor.

The protein localises to the cytoplasm. The enzyme catalyses UDP-N-acetyl-alpha-D-muramate + NADP(+) = UDP-N-acetyl-3-O-(1-carboxyvinyl)-alpha-D-glucosamine + NADPH + H(+). The protein operates within cell wall biogenesis; peptidoglycan biosynthesis. Its function is as follows. Cell wall formation. The protein is UDP-N-acetylenolpyruvoylglucosamine reductase of Synechococcus sp. (strain RCC307).